The following is a 332-amino-acid chain: tRNA-dihydrouridine(20/20a) synthase (332 aa).

Residues 19-21 and glutamine 71 each bind FMN; that span reads PML. Cysteine 101 acts as the Proton donor in catalysis. Residues lysine 140, histidine 173, 213–215, and 235–236 each bind FMN; these read NGG and GR.

This sequence belongs to the Dus family. DusA subfamily. FMN is required as a cofactor.

It carries out the reaction 5,6-dihydrouridine(20) in tRNA + NADP(+) = uridine(20) in tRNA + NADPH + H(+). It catalyses the reaction 5,6-dihydrouridine(20) in tRNA + NAD(+) = uridine(20) in tRNA + NADH + H(+). The enzyme catalyses 5,6-dihydrouridine(20a) in tRNA + NADP(+) = uridine(20a) in tRNA + NADPH + H(+). The catalysed reaction is 5,6-dihydrouridine(20a) in tRNA + NAD(+) = uridine(20a) in tRNA + NADH + H(+). Its function is as follows. Catalyzes the synthesis of 5,6-dihydrouridine (D), a modified base found in the D-loop of most tRNAs, via the reduction of the C5-C6 double bond in target uridines. Specifically modifies U20 and U20a in tRNAs. In Salmonella typhimurium (strain LT2 / SGSC1412 / ATCC 700720), this protein is tRNA-dihydrouridine(20/20a) synthase.